An 81-amino-acid polypeptide reads, in one-letter code: Protein Vpu (81 aa).

Topologically, residues 1–7 (MQSLEIL) are extracellular. The helical transmembrane segment at 8 to 28 (AIVALVVAAILAIVVWTIVGI) threads the bilayer. Residues 29–81 (EIRKTLRQKKIDRLIDRIRERAEDSGNESDGDEEELSALVEMGHHAPWDVDDL) are Cytoplasmic-facing. The disordered stretch occupies residues 50–81 (AEDSGNESDGDEEELSALVEMGHHAPWDVDDL). Phosphoserine; by host CK2 is present on residues S53 and S57. The segment covering 53-64 (SGNESDGDEEEL) has biased composition (acidic residues). The segment covering 70–81 (MGHHAPWDVDDL) has biased composition (basic and acidic residues).

Belongs to the HIV-1 VPU protein family. As to quaternary structure, homopentamer. Interacts with host CD4 and BRTC; these interactions induce proteasomal degradation of CD4. Interacts with host BST2; this interaction leads to the degradation of host BST2. Interacts with host FBXW11. Interacts with host AP1M1; this interaction plays a role in the mistrafficking and subsequent degradation of host BST2. Interacts with host RANBP2; this interaction allows Vpu to down-regulate host BLM sumoylation. Phosphorylated by host CK2. This phosphorylation is necessary for interaction with human BTRC and degradation of CD4.

The protein localises to the host membrane. Ion channel activity is inhibited by hexamethylene amiloride in vitro. Enhances virion budding by targeting host CD4 and Tetherin/BST2 to proteasome degradation. Degradation of CD4 prevents any unwanted premature interactions between viral Env and its host receptor CD4 in the endoplasmic reticulum. Degradation of antiretroviral protein Tetherin/BST2 is important for virion budding, as BST2 tethers new viral particles to the host cell membrane. Mechanistically, Vpu bridges either CD4 or BST2 to BTRC, a substrate recognition subunit of the Skp1/Cullin/F-box protein E3 ubiquitin ligase, induces their ubiquitination and subsequent proteasomal degradation. The alteration of the E3 ligase specificity by Vpu seems to promote the degradation of host IKBKB, leading to NF-kappa-B down-regulation and subsequent apoptosis. Acts as a viroporin that forms an oligomeric ion channel in membranes. Modulates the host DNA repair mechanisms to promote degradation of nuclear viral cDNA in cells that are already productively infected in order to suppress immune sensing and proviral hyper-integration (superinfection). Manipulates PML-NBs and modulates SUMOylation of host BLM protein thereby enhancing its DNA-end processing activity toward viral unintegrated linear DNA. Also inhibits RAD52-mediated homologous repair of viral cDNA, preventing the generation of dead-end circular forms of single copies of the long terminal repeat and permitting sustained nucleolytic attack. This chain is Protein Vpu, found in Homo sapiens (Human).